We begin with the raw amino-acid sequence, 294 residues long: Ribosomal RNA small subunit methyltransferase A (294 aa).

Asn-31, Leu-33, Gly-58, Glu-79, Asp-111, and Asn-136 together coordinate S-adenosyl-L-methionine.

It belongs to the class I-like SAM-binding methyltransferase superfamily. rRNA adenine N(6)-methyltransferase family. RsmA subfamily.

Its subcellular location is the cytoplasm. It catalyses the reaction adenosine(1518)/adenosine(1519) in 16S rRNA + 4 S-adenosyl-L-methionine = N(6)-dimethyladenosine(1518)/N(6)-dimethyladenosine(1519) in 16S rRNA + 4 S-adenosyl-L-homocysteine + 4 H(+). Its function is as follows. Specifically dimethylates two adjacent adenosines (A1518 and A1519) in the loop of a conserved hairpin near the 3'-end of 16S rRNA in the 30S particle. May play a critical role in biogenesis of 30S subunits. In Lactobacillus helveticus (strain DPC 4571), this protein is Ribosomal RNA small subunit methyltransferase A.